Consider the following 461-residue polypeptide: tRNA modification GTPase MnmE (461 aa).

Residues R23, E84, and K123 each contribute to the (6S)-5-formyl-5,6,7,8-tetrahydrofolate site. The TrmE-type G domain occupies 219 to 382 (GVQVVIGGRP…LLDHLTDTVA (164 aa)). Residues 229–234 (NAGKST), 248–254 (SETPGTT), 273–276 (DTAG), and 337–340 (NKAD) each bind GTP. Residues S233 and T254 each contribute to the Mg(2+) site. Residue K461 coordinates (6S)-5-formyl-5,6,7,8-tetrahydrofolate.

It belongs to the TRAFAC class TrmE-Era-EngA-EngB-Septin-like GTPase superfamily. TrmE GTPase family. In terms of assembly, homodimer. Heterotetramer of two MnmE and two MnmG subunits. Requires K(+) as cofactor.

Its subcellular location is the cytoplasm. Functionally, exhibits a very high intrinsic GTPase hydrolysis rate. Involved in the addition of a carboxymethylaminomethyl (cmnm) group at the wobble position (U34) of certain tRNAs, forming tRNA-cmnm(5)s(2)U34. The sequence is that of tRNA modification GTPase MnmE from Salinibacter ruber (strain DSM 13855 / M31).